The sequence spans 3603 residues: Plipastatin synthase subunit D (3603 aa).

A condensation 1 region spans residues 7 to 306 (IQDIYPLSYM…NTMPVRVQGA (300 aa)). Residues 7–1043 (IQDIYPLSYM…ALIIREAEQN (1037 aa)) form a domain 1 (proline-activating) region. Residues 490 to 889 (TYRELNKAAN…NHPDISEAAI (400 aa)) are adenylation 1. The 76-residue stretch at 966–1041 (APRNLLEAKL…GLALIIREAE (76 aa)) folds into the Carrier 1 domain. Residue Ser-1001 is modified to O-(pantetheine 4'-phosphoryl)serine. A condensation 2 region spans residues 1053 to 1334 (KRDTYPVSSA…NTLALRTRPA (282 aa)). Positions 1053–2069 (KRDTYPVSSA…TVEGLATVIR (1017 aa)) are domain 2 (glutamine-activating). Residues 1521-1924 (TYKELNEQAN…SIEGVREAAV (404 aa)) are adenylation 2. In terms of domain architecture, Carrier 2 spans 1997 to 2072 (APRNVTEMKL…GLATVIREGT (76 aa)). Ser-2032 carries the post-translational modification O-(pantetheine 4'-phosphoryl)serine. Residues 2084–2374 (KQETYPVSSA…NTLALRTRPE (291 aa)) form a condensation 3 region. A domain 3 (proline-activating) region spans residues 2084-3596 (KQETYPVSSA…ELTEDALQEI (1513 aa)). An adenylation 3 region spans residues 2560–2956 (TYQELDEWSN…CIKGVKDAAV (397 aa)). The Carrier 3 domain maps to 3034–3108 (PPSSKMEQIL…ELAAYIRDSD (75 aa)). At Ser-3069 the chain carries O-(pantetheine 4'-phosphoryl)serine. Residues 3116 to 3596 (VEGDVQWSPV…ELTEDALQEI (481 aa)) form an epimerization region.

Belongs to the ATP-dependent AMP-binding enzyme family. The cofactor is pantetheine 4'-phosphate.

In terms of biological role, this protein is a multifunctional enzyme, able to activate and polymerize the amino acids Pro, Gln and Tyr as part of the biosynthesis of the lipopeptide antibiotic plipastatin. The Tyr residue is further epimerized to the D-isomer form. The activation sites for these amino acids consist of individual domains. The protein is Plipastatin synthase subunit D (ppsD) of Bacillus subtilis (strain 168).